Reading from the N-terminus, the 430-residue chain is Phosphoribosylamine--glycine ligase (430 aa).

The region spanning 109-314 (RGLMNKYGID…FLTIAEHIIN (206 aa)) is the ATP-grasp domain. An ATP-binding site is contributed by 136–192 (IREYPGDLAVKPTGLTGGKGVKVMGEQVDREGAVEYAMTLKDQVIILEERLLGEEFT). Residues Q272, E284, and N286 each coordinate Mg(2+). Residues Q272, E284, and N286 each contribute to the Mn(2+) site.

Belongs to the GARS family. Mg(2+) serves as cofactor. Mn(2+) is required as a cofactor.

The catalysed reaction is 5-phospho-beta-D-ribosylamine + glycine + ATP = N(1)-(5-phospho-beta-D-ribosyl)glycinamide + ADP + phosphate + H(+). It functions in the pathway purine metabolism; IMP biosynthesis via de novo pathway; N(1)-(5-phospho-D-ribosyl)glycinamide from 5-phospho-alpha-D-ribose 1-diphosphate: step 2/2. In Methanocorpusculum labreanum (strain ATCC 43576 / DSM 4855 / Z), this protein is Phosphoribosylamine--glycine ligase.